Reading from the N-terminus, the 237-residue chain is Ras-related protein Rab-23 (237 aa).

GTP-binding residues include Val20, Gly21, Lys22, Ser23, Ser24, Tyr38, and Thr41. A Mg(2+)-binding site is contributed by Ser23. A Switch 1 motif is present at residues 28-46 (RYCKGIFTKDYKKTIGVDF). The Mg(2+) site is built by Thr41 and Asp64. The Switch 2 signature appears at 65–84 (TAGQEEFDAITKAYYRGAQA). 7 residues coordinate GTP: Gly67, Asn121, Lys122, Asp124, Ser151, Val152, and Lys153. A phosphoserine mark is found at Ser186 and Ser187. The segment covering 188–208 (SNKIGVFNTSGGSHSGQNSGT) has biased composition (polar residues). A disordered region spans residues 188–237 (SNKIGVFNTSGGSHSGQNSGTLNGGDVINLRPNKQRTKKNRNPFSSCSIP). At Cys234 the chain carries Cysteine methyl ester. A lipid anchor (S-geranylgeranyl cysteine) is attached at Cys234. Positions 235–237 (SIP) are cleaved as a propeptide — removed in mature form.

This sequence belongs to the small GTPase superfamily. Rab family. As to quaternary structure, interacts with SUFU. Mg(2+) is required as a cofactor.

The protein localises to the cell membrane. Its subcellular location is the cytoplasm. The protein resides in the cytoplasmic vesicle. It is found in the autophagosome. It localises to the endosome membrane. The protein localises to the phagosome. Its subcellular location is the phagosome membrane. The enzyme catalyses GTP + H2O = GDP + phosphate + H(+). Its activity is regulated as follows. Regulated by guanine nucleotide exchange factors (GEFs) which promote the exchange of bound GDP for free GTP. Regulated by GTPase activating proteins (GAPs) which increase the GTP hydrolysis activity. Inhibited by GDP dissociation inhibitors (GDIs). The small GTPases Rab are key regulators of intracellular membrane trafficking, from the formation of transport vesicles to their fusion with membranes. Rabs cycle between an inactive GDP-bound form and an active GTP-bound form that is able to recruit to membranes different set of downstream effectors directly responsible for vesicle formation, movement, tethering and fusion. Together with SUFU, prevents nuclear import of GLI1, and thereby inhibits GLI1 transcription factor activity. Regulates GLI1 in differentiating chondrocytes. Likewise, regulates GLI3 proteolytic processing and modulates GLI2 and GLI3 transcription factor activity. Plays a role in autophagic vacuole assembly, and mediates defense against pathogens, such as S.aureus, by promoting their capture by autophagosomes that then merge with lysosomes. The polypeptide is Ras-related protein Rab-23 (Homo sapiens (Human)).